A 264-amino-acid chain; its full sequence is S-adenosylmethionine decarboxylase proenzyme (264 aa).

The active-site Schiff-base intermediate with substrate; via pyruvic acid is S112. A Pyruvic acid (Ser); by autocatalysis modification is found at S112. The Proton acceptor; for processing activity role is filled by H117. C140 serves as the catalytic Proton donor; for catalytic activity.

The protein belongs to the prokaryotic AdoMetDC family. Type 2 subfamily. As to quaternary structure, heterooctamer of four alpha and four beta chains arranged as a tetramer of alpha/beta heterodimers. Requires pyruvate as cofactor. Is synthesized initially as an inactive proenzyme. Formation of the active enzyme involves a self-maturation process in which the active site pyruvoyl group is generated from an internal serine residue via an autocatalytic post-translational modification. Two non-identical subunits are generated from the proenzyme in this reaction, and the pyruvate is formed at the N-terminus of the alpha chain, which is derived from the carboxyl end of the proenzyme. The post-translation cleavage follows an unusual pathway, termed non-hydrolytic serinolysis, in which the side chain hydroxyl group of the serine supplies its oxygen atom to form the C-terminus of the beta chain, while the remainder of the serine residue undergoes an oxidative deamination to produce ammonia and the pyruvoyl group blocking the N-terminus of the alpha chain.

It carries out the reaction S-adenosyl-L-methionine + H(+) = S-adenosyl 3-(methylsulfanyl)propylamine + CO2. It participates in amine and polyamine biosynthesis; S-adenosylmethioninamine biosynthesis; S-adenosylmethioninamine from S-adenosyl-L-methionine: step 1/1. In terms of biological role, catalyzes the decarboxylation of S-adenosylmethionine to S-adenosylmethioninamine (dcAdoMet), the propylamine donor required for the synthesis of the polyamines spermine and spermidine from the diamine putrescine. In Enterobacter sp. (strain 638), this protein is S-adenosylmethionine decarboxylase proenzyme.